The sequence spans 243 residues: UPF0502 protein H16_B1091 (243 aa).

The disordered stretch occupies residues 1 to 23 (MQSNHDSDASQAGDRPARPALRP).

Belongs to the UPF0502 family.

This Cupriavidus necator (strain ATCC 17699 / DSM 428 / KCTC 22496 / NCIMB 10442 / H16 / Stanier 337) (Ralstonia eutropha) protein is UPF0502 protein H16_B1091.